The following is a 553-amino-acid chain: Phospholipase-B 81 (553 aa).

Positions 1-35 (MVRFGSAASSDNRRRRCWSWYWGGLLLLWAVAETR) are cleaved as a signal peptide. Residues Asn-69, Asn-313, Asn-416, and Asn-531 are each glycosylated (N-linked (GlcNAc...) asparagine).

It belongs to the phospholipase B-like family. As to expression, expressed by the venom gland.

It is found in the secreted. Functionally, may cause hemolysis. This Drysdalia coronoides (White-lipped snake) protein is Phospholipase-B 81.